A 118-amino-acid chain; its full sequence is Protein TusC (118 aa).

The protein belongs to the DsrF/TusC family. Heterohexamer, formed by a dimer of trimers. The hexameric TusBCD complex contains 2 copies each of TusB, TusC and TusD. The TusBCD complex interacts with TusE.

It localises to the cytoplasm. Part of a sulfur-relay system required for 2-thiolation of 5-methylaminomethyl-2-thiouridine (mnm(5)s(2)U) at tRNA wobble positions. The polypeptide is Protein TusC (Salmonella arizonae (strain ATCC BAA-731 / CDC346-86 / RSK2980)).